Reading from the N-terminus, the 465-residue chain is Siroheme synthase (465 aa).

The precorrin-2 dehydrogenase /sirohydrochlorin ferrochelatase stretch occupies residues 1–203; it reads MDFLPLFHSL…GRPAEAERLL (203 aa). Residues 22-23 and 43-44 contribute to the NAD(+) site; these read EV and PQ. The residue at position 128 (Ser-128) is a Phosphoserine. The uroporphyrinogen-III C-methyltransferase stretch occupies residues 217–465; that stretch reads GEVYLVGAGP…AWFEGAREDA (249 aa). Pro-226 serves as a coordination point for S-adenosyl-L-methionine. Asp-249 (proton acceptor) is an active-site residue. Catalysis depends on Lys-271, which acts as the Proton donor. S-adenosyl-L-methionine contacts are provided by residues 302–304, Ile-307, 332–333, Met-384, and Gly-413; these read GGD and TA.

It in the N-terminal section; belongs to the precorrin-2 dehydrogenase / sirohydrochlorin ferrochelatase family. The protein in the C-terminal section; belongs to the precorrin methyltransferase family.

The catalysed reaction is uroporphyrinogen III + 2 S-adenosyl-L-methionine = precorrin-2 + 2 S-adenosyl-L-homocysteine + H(+). It carries out the reaction precorrin-2 + NAD(+) = sirohydrochlorin + NADH + 2 H(+). The enzyme catalyses siroheme + 2 H(+) = sirohydrochlorin + Fe(2+). It functions in the pathway cofactor biosynthesis; adenosylcobalamin biosynthesis; precorrin-2 from uroporphyrinogen III: step 1/1. It participates in cofactor biosynthesis; adenosylcobalamin biosynthesis; sirohydrochlorin from precorrin-2: step 1/1. The protein operates within porphyrin-containing compound metabolism; siroheme biosynthesis; precorrin-2 from uroporphyrinogen III: step 1/1. Its pathway is porphyrin-containing compound metabolism; siroheme biosynthesis; siroheme from sirohydrochlorin: step 1/1. It functions in the pathway porphyrin-containing compound metabolism; siroheme biosynthesis; sirohydrochlorin from precorrin-2: step 1/1. Its function is as follows. Multifunctional enzyme that catalyzes the SAM-dependent methylations of uroporphyrinogen III at position C-2 and C-7 to form precorrin-2 via precorrin-1. Then it catalyzes the NAD-dependent ring dehydrogenation of precorrin-2 to yield sirohydrochlorin. Finally, it catalyzes the ferrochelation of sirohydrochlorin to yield siroheme. The protein is Siroheme synthase of Pseudomonas aeruginosa (strain UCBPP-PA14).